The sequence spans 141 residues: MTSVKERVAAPSVNFEKILFFPEGIPGFEDFKEYRIFHKETNGLAIYWLESCDDAAVTFTLVAPDHYGLHYDFNLSDEEQTLLQAEEPMQLAIFLIVSKGEGQYAGLNANISGPIVINVQRQRALQKVLQQSRVLTTIIDQ.

The protein belongs to the FliW family. As to quaternary structure, interacts with translational regulator CsrA and flagellin(s).

The protein resides in the cytoplasm. Functionally, acts as an anti-CsrA protein, binds CsrA and prevents it from repressing translation of its target genes, one of which is flagellin. Binds to flagellin and participates in the assembly of the flagellum. This Desulfotalea psychrophila (strain LSv54 / DSM 12343) protein is Flagellar assembly factor FliW 1.